A 114-amino-acid chain; its full sequence is Phosphoribosyl-AMP cyclohydrolase (114 aa).

Aspartate 76 contributes to the Mg(2+) binding site. Cysteine 77 is a Zn(2+) binding site. The Mg(2+) site is built by aspartate 78 and aspartate 80. Residues cysteine 93 and cysteine 100 each contribute to the Zn(2+) site.

This sequence belongs to the PRA-CH family. In terms of assembly, homodimer. Mg(2+) is required as a cofactor. The cofactor is Zn(2+).

Its subcellular location is the cytoplasm. It catalyses the reaction 1-(5-phospho-beta-D-ribosyl)-5'-AMP + H2O = 1-(5-phospho-beta-D-ribosyl)-5-[(5-phospho-beta-D-ribosylamino)methylideneamino]imidazole-4-carboxamide. It functions in the pathway amino-acid biosynthesis; L-histidine biosynthesis; L-histidine from 5-phospho-alpha-D-ribose 1-diphosphate: step 3/9. In terms of biological role, catalyzes the hydrolysis of the adenine ring of phosphoribosyl-AMP. The sequence is that of Phosphoribosyl-AMP cyclohydrolase from Streptococcus sanguinis (strain SK36).